Consider the following 562-residue polypeptide: Adenylate kinase isoenzyme 5 (562 aa).

Adenylate kinase stretches follow at residues 133–316 (KIIL…VAVD) and 377–559 (KIIF…TAID). 142–147 (GSGKGT) is an ATP binding site. The segment at 162-193 (SVGELLRKKIHSASSNRKWSLIAKIITNGELA) is NMP 1. AMP contacts are provided by residues arginine 168, 191–193 (ELA), 219–222 (GFPR), and glutamine 226. An LID 1 region spans residues 256 to 266 (KRAEQQGRPDD). Arginine 257 contributes to the ATP binding site. Positions 263 and 274 each coordinate AMP. 386 to 391 (GSGKGT) provides a ligand contact to ATP. Residues 406–435 (STGELLRQELTSESERSKLIRDIMERGDLV) form an NMP 2 region. AMP contacts are provided by residues threonine 407, arginine 412, 433–435 (DLV), 462–465 (GYPR), and glutamine 469. An LID 2 region spans residues 499 to 509 (QRSQSSQRGED). Residue arginine 500 coordinates ATP. AMP-binding residues include arginine 506 and arginine 517. ATP is bound at residue glycine 545.

Belongs to the adenylate kinase family. As to quaternary structure, monomer. Interacts with YWHAZ. In terms of tissue distribution, brain specific.

The protein localises to the cytoplasm. It catalyses the reaction AMP + ATP = 2 ADP. It carries out the reaction a 2'-deoxyribonucleoside 5'-diphosphate + ATP = a 2'-deoxyribonucleoside 5'-triphosphate + ADP. The catalysed reaction is a ribonucleoside 5'-diphosphate + ATP = a ribonucleoside 5'-triphosphate + ADP. Nucleoside monophosphate (NMP) kinase that catalyzes the reversible transfer of the terminal phosphate group between nucleoside triphosphates and monophosphates. Active on AMP and dAMP with ATP as a donor. When GTP is used as phosphate donor, the enzyme phosphorylates AMP, CMP, and to a small extent dCMP. Also displays broad nucleoside diphosphate kinase activity. The sequence is that of Adenylate kinase isoenzyme 5 (Ak5) from Mus musculus (Mouse).